The following is a 439-amino-acid chain: Methionine aminopeptidase 2-1 (439 aa).

The interval 1-87 (MSGGESRSPD…DKLFPSGNFP (87 aa)) is disordered. Acidic residues predominate over residues 22-32 (GGDDEESDGDG). The span at 47–61 (KKRKKRNKKKSKKKS) shows a compositional bias: basic residues. His-190 is a substrate binding site. Residues Asp-211, Asp-222, and His-291 each coordinate a divalent metal cation. His-299 lines the substrate pocket. A divalent metal cation-binding residues include Glu-324 and Glu-420.

Belongs to the peptidase M24A family. Methionine aminopeptidase eukaryotic type 2 subfamily. Co(2+) serves as cofactor. The cofactor is Zn(2+). Requires Mn(2+) as cofactor. It depends on Fe(2+) as a cofactor.

The protein localises to the cytoplasm. The enzyme catalyses Release of N-terminal amino acids, preferentially methionine, from peptides and arylamides.. Cotranslationally removes the N-terminal methionine from nascent proteins. The N-terminal methionine is often cleaved when the second residue in the primary sequence is small and uncharged (Met-Ala-, Cys, Gly, Pro, Ser, Thr, or Val). The chain is Methionine aminopeptidase 2-1 from Chaetomium globosum (strain ATCC 6205 / CBS 148.51 / DSM 1962 / NBRC 6347 / NRRL 1970) (Soil fungus).